The following is a 154-amino-acid chain: ORF3b protein (154 aa).

The tract at residues 80–138 (LQTLVLKMLHSSSLTSLLKTHRMCKYTQSTALQELLIQQWIQFMMSRRRLLACLCKHKK) is mitochondrial targeting signal. Residues 134–154 (CKHKKVSTNLCTHSFRKKQVR) are nucleolar targeting. A Bipartite nuclear localization signal motif is present at residues 135-153 (KHKKVSTNLCTHSFRKKQV).

As to quaternary structure, interacts with host RUNX1 isoform b.

The protein resides in the host nucleus. The protein localises to the host nucleolus. Its subcellular location is the host mitochondrion. Its function is as follows. Induces host cell G0/G1 arrest and apoptosis. In Homo sapiens (Human), this protein is ORF3b protein.